Here is a 79-residue protein sequence, read N- to C-terminus: Large ribosomal subunit protein bL28 (79 aa).

The protein belongs to the bacterial ribosomal protein bL28 family.

The polypeptide is Large ribosomal subunit protein bL28 (Christiangramia forsetii (strain DSM 17595 / CGMCC 1.15422 / KT0803) (Gramella forsetii)).